The primary structure comprises 149 residues: D-aminoacyl-tRNA deacylase (149 aa).

Positions 137-138 match the Gly-cisPro motif, important for rejection of L-amino acids motif; it reads GP.

This sequence belongs to the DTD family. As to quaternary structure, homodimer.

The protein resides in the cytoplasm. The catalysed reaction is glycyl-tRNA(Ala) + H2O = tRNA(Ala) + glycine + H(+). The enzyme catalyses a D-aminoacyl-tRNA + H2O = a tRNA + a D-alpha-amino acid + H(+). In terms of biological role, an aminoacyl-tRNA editing enzyme that deacylates mischarged D-aminoacyl-tRNAs. Also deacylates mischarged glycyl-tRNA(Ala), protecting cells against glycine mischarging by AlaRS. Acts via tRNA-based rather than protein-based catalysis; rejects L-amino acids rather than detecting D-amino acids in the active site. By recycling D-aminoacyl-tRNA to D-amino acids and free tRNA molecules, this enzyme counteracts the toxicity associated with the formation of D-aminoacyl-tRNA entities in vivo and helps enforce protein L-homochirality. This is D-aminoacyl-tRNA deacylase from Geobacter sp. (strain M21).